A 256-amino-acid polypeptide reads, in one-letter code: Imidazole glycerol phosphate synthase subunit HisF (256 aa).

Residues aspartate 12 and aspartate 131 contribute to the active site.

This sequence belongs to the HisA/HisF family. Heterodimer of HisH and HisF.

It localises to the cytoplasm. It carries out the reaction 5-[(5-phospho-1-deoxy-D-ribulos-1-ylimino)methylamino]-1-(5-phospho-beta-D-ribosyl)imidazole-4-carboxamide + L-glutamine = D-erythro-1-(imidazol-4-yl)glycerol 3-phosphate + 5-amino-1-(5-phospho-beta-D-ribosyl)imidazole-4-carboxamide + L-glutamate + H(+). It participates in amino-acid biosynthesis; L-histidine biosynthesis; L-histidine from 5-phospho-alpha-D-ribose 1-diphosphate: step 5/9. In terms of biological role, IGPS catalyzes the conversion of PRFAR and glutamine to IGP, AICAR and glutamate. The HisF subunit catalyzes the cyclization activity that produces IGP and AICAR from PRFAR using the ammonia provided by the HisH subunit. This Pseudomonas putida (strain GB-1) protein is Imidazole glycerol phosphate synthase subunit HisF.